Reading from the N-terminus, the 446-residue chain is tRNA modification GTPase MnmE (446 aa).

R22, E80, and K119 together coordinate (6S)-5-formyl-5,6,7,8-tetrahydrofolate. The TrmE-type G domain maps to 215–370 (GLSLVIAGRP…LKKVIKQVVG (156 aa)). N225 is a K(+) binding site. Residues 225–230 (NAGKST), 244–250 (TEIAGTT), and 269–272 (DTAG) each bind GTP. S229 contacts Mg(2+). Positions 244, 246, and 249 each coordinate K(+). T250 provides a ligand contact to Mg(2+). K446 lines the (6S)-5-formyl-5,6,7,8-tetrahydrofolate pocket.

The protein belongs to the TRAFAC class TrmE-Era-EngA-EngB-Septin-like GTPase superfamily. TrmE GTPase family. In terms of assembly, homodimer. Heterotetramer of two MnmE and two MnmG subunits. K(+) is required as a cofactor.

The protein resides in the cytoplasm. In terms of biological role, exhibits a very high intrinsic GTPase hydrolysis rate. Involved in the addition of a carboxymethylaminomethyl (cmnm) group at the wobble position (U34) of certain tRNAs, forming tRNA-cmnm(5)s(2)U34. This Legionella pneumophila (strain Paris) protein is tRNA modification GTPase MnmE.